A 517-amino-acid polypeptide reads, in one-letter code: Beta-galactoside alpha-2,6-sialyltransferase 2 (517 aa).

Over 1 to 10 (MKPNLKQWKQ) the chain is Cytoplasmic. A helical; Signal-anchor for type II membrane protein membrane pass occupies residues 11–31 (FMLFGICAWGLLFLVIFVYFT). At 32–517 (DSNSVEPVPS…IHCPIKDHIT (486 aa)) the chain is on the lumenal side. N-linked (GlcNAc...) asparagine glycans are attached at residues N201, N298, and N328. 3 cysteine pairs are disulfide-bonded: C244-C510, C287-C439, and C457-C468.

It belongs to the glycosyltransferase 29 family.

It is found in the golgi apparatus. It localises to the golgi stack membrane. The catalysed reaction is a beta-D-galactoside + CMP-N-acetyl-beta-neuraminate = an N-acetyl-alpha-neuraminyl-(2-&gt;6)-beta-D-galactosyl derivative + CMP + H(+). In terms of biological role, transfers sialic acid from the donor of substrate CMP-sialic acid to galactose containing acceptor substrates. This Xenopus tropicalis (Western clawed frog) protein is Beta-galactoside alpha-2,6-sialyltransferase 2 (st6gal2).